The following is a 640-amino-acid chain: tRNA-dihydrouridine(47) synthase [NAD(P)(+)]-like (640 aa).

The segment covering 1–10 has biased composition (low complexity); sequence MAEVAEVAAE. Disordered stretches follow at residues 1-22 and 47-106; these read MAEV…VGAC and DKQE…PHMK. The residue at position 2 (alanine 2) is an N-acetylalanine. Basic and acidic residues predominate over residues 64–91; sequence PEAKRIRLEDGQENGKTEVAVESHERQV. The segment covering 92-106 has biased composition (basic residues); sequence PKRARGQNKSRPHMK. 2 C3H1-type zinc fingers span residues 110–140 and 148–178; these read YDKE…HDVG and ADLG…HLGP. Serine 267 carries the post-translational modification Phosphoserine. FMN contacts are provided by residues 301-303 and glutamine 355; that span reads PLT. Cysteine 386 functions as the Proton donor in the catalytic mechanism. Lysine 406 is covalently cross-linked (Glycyl lysine isopeptide (Lys-Gly) (interchain with G-Cter in SUMO2)). FMN contacts are provided by residues lysine 425, histidine 455, 487 to 489, and 510 to 511; these read NGD and AR.

This sequence belongs to the Dus family. Dus3 subfamily. The cofactor is FMN.

The enzyme catalyses 5,6-dihydrouridine(47) in tRNA + NAD(+) = uridine(47) in tRNA + NADH + H(+). The catalysed reaction is 5,6-dihydrouridine(47) in tRNA + NADP(+) = uridine(47) in tRNA + NADPH + H(+). It carries out the reaction a 5,6-dihydrouridine in mRNA + NAD(+) = a uridine in mRNA + NADH + H(+). It catalyses the reaction a 5,6-dihydrouridine in mRNA + NADP(+) = a uridine in mRNA + NADPH + H(+). In terms of biological role, catalyzes the synthesis of dihydrouridine, a modified base, in various RNAs, such as tRNAs, mRNAs and some long non-coding RNAs (lncRNAs). Mainly modifies the uridine in position 47 (U47) in the D-loop of most cytoplasmic tRNAs. Also able to mediate the formation of dihydrouridine in some mRNAs, thereby regulating their translation. This is tRNA-dihydrouridine(47) synthase [NAD(P)(+)]-like from Rattus norvegicus (Rat).